The following is a 1062-amino-acid chain: MQEVTSSFTPRVIEASVQKFWTQEDIYARVQEQNRDGKTWFFVDGPPYTTGHIHLGTAWNKILKDSILRYKRMHGLHVIDRAGYDMHGLPIEVRVEHELGFENKKDIEAFGIGAFIERCKQFALSHKDIMSEQFKSLGVWMNFDDPYQTIMPEYIEAAWWTLKQADEKGLLDRGHRVVNWCPRCETAIADSEVEYWDEQDPSIFVKFPIHGLMNEYLVIWTTTPWTLPANVAVAVDKDFIYARVEAIKEGKKEILWIAKDLVEPVLKRGKYQDYSILSEKTGEELAGTTYDSPLADLIPRQKEIVHTVVTAGFVEMDNTGMVHIAPGHGWDDYLLGVEKGLDVFCPVDGAGYYTDEGGIYAGQFVRDANEKILSDLGSHLLGRQKITHRYGHCWRCKTPIIYRATEQWFISVPKMKEKMLSEIKATSWYPDWAGSARFYDFVSDARDWCISRQRYWGIPIPVWQCSSCSAHRVFGTVAELNAAAGSNLTDPHRPYVDEITVPCSCGGTMKRVEDIFDVWFDSAMASWATLGFPRNDALFHEMWPADFITEGQDQTRGWFYSQLGASTIAFNRSPYKSVLMHGFALDADGRKMSKSLGNVVTPEEVVQKFGVDVLRLYILSSNAPWEDLKFNWDGVSTVNRTMNILWNVYRFPLPYMILDGFSPAQTSDGKYDDEYIVRSYREMPEIDRWIISRINTIARSVSADMDEYQLHRVTRLLMNFILEDLSRWYVQIVRPRMWLEEDSPDKKFAYETITYCLRTLCRLLAPFTPHITEAMYENLRLPEDPVSVHMLKWPAGDIRLIDENLERRMDVVRKFDEAVANARQAGKRKLRWPVQNVIVVTSSESVIEAFRSMEDLAKDRANTRNIEVIQGSWERMRFNAEPVMKKIGPSFGKKGPVVKGLIEAADGSALRKQLEESGSVTLSDGSEEFVLTAEHMTFSQHLPEGIFGAEMTDASVYVDTTLTEDLEAEGYSREIIRRLQEMRKQLDLNVEDNIVIDAVIEDVHLRELLSASWLDLIKQEVRGKTLKIHDSVGGRDGSVLFQLDRDWDIEGVNVTLGISLAG.

The short motif at Pro-47–Thr-57 is the 'HIGH' region element. The short motif at Lys-591 to Ser-595 is the 'KMSKS' region element. Lys-594 contributes to the ATP binding site.

Belongs to the class-I aminoacyl-tRNA synthetase family. IleS type 2 subfamily. Monomer. Zn(2+) serves as cofactor.

Its subcellular location is the cytoplasm. It carries out the reaction tRNA(Ile) + L-isoleucine + ATP = L-isoleucyl-tRNA(Ile) + AMP + diphosphate. Functionally, catalyzes the attachment of isoleucine to tRNA(Ile). As IleRS can inadvertently accommodate and process structurally similar amino acids such as valine, to avoid such errors it has two additional distinct tRNA(Ile)-dependent editing activities. One activity is designated as 'pretransfer' editing and involves the hydrolysis of activated Val-AMP. The other activity is designated 'posttransfer' editing and involves deacylation of mischarged Val-tRNA(Ile). This chain is Isoleucine--tRNA ligase, found in Methanospirillum hungatei JF-1 (strain ATCC 27890 / DSM 864 / NBRC 100397 / JF-1).